The primary structure comprises 537 residues: Serendipity locus protein alpha (537 aa).

The protein localises to the cytoplasm. The protein resides in the cell membrane. Required for the cellularization of the syncytial blastoderm embryo. Involved in the localization of the actin filaments just prior to and during plasma membrane invagination. Sry-alpha together with nullo and bnk may provide auxiliary functions, by acting both to stabilize a large and dynamic microfilament structure and regulate its functions. This Drosophila virilis (Fruit fly) protein is Serendipity locus protein alpha (Sry-alpha).